A 79-amino-acid chain; its full sequence is CDC42 small effector protein 1-B (79 aa).

2 S-palmitoyl cysteine lipidation sites follow: Cys10 and Cys11. Residues 30–43 form the CRIB domain; that stretch reads IGEPMNFVHLTHIG. The interval 41–79 is disordered; the sequence is HIGSGDMGASDGLPKAGTVQEQMRSKCGRDRQWSNSRVL. Positions 63-72 are enriched in basic and acidic residues; it reads MRSKCGRDRQ.

This sequence belongs to the CDC42SE/SPEC family.

It is found in the cytoplasm. The protein localises to the cytoskeleton. It localises to the cell membrane. In terms of biological role, probably involved in the organization of the actin cytoskeleton by acting downstream of CDC42, inducing actin filament assembly. The chain is CDC42 small effector protein 1-B (cdc42se1-b) from Xenopus laevis (African clawed frog).